The chain runs to 404 residues: Glucose-1-phosphate adenylyltransferase 2 (404 aa).

Alpha-D-glucose 1-phosphate contacts are provided by residues Tyr97, Gly162, 177 to 178, and Ser195; that span reads EK.

It belongs to the bacterial/plant glucose-1-phosphate adenylyltransferase family. As to quaternary structure, homotetramer.

It carries out the reaction alpha-D-glucose 1-phosphate + ATP + H(+) = ADP-alpha-D-glucose + diphosphate. It functions in the pathway glycan biosynthesis; glycogen biosynthesis. Its function is as follows. Involved in the biosynthesis of ADP-glucose, a building block required for the elongation reactions to produce glycogen. Catalyzes the reaction between ATP and alpha-D-glucose 1-phosphate (G1P) to produce pyrophosphate and ADP-Glc. This is Glucose-1-phosphate adenylyltransferase 2 from Vibrio vulnificus (strain CMCP6).